The sequence spans 393 residues: Probable acetyl-CoA acyltransferase (393 aa).

Cysteine 88 serves as the catalytic Acyl-thioester intermediate. Active-site proton acceptor residues include histidine 349 and cysteine 378.

This sequence belongs to the thiolase-like superfamily. Thiolase family.

It is found in the cytoplasm. It catalyses the reaction 2 acetyl-CoA = acetoacetyl-CoA + CoA. The chain is Probable acetyl-CoA acyltransferase from Staphylococcus aureus (strain NCTC 8325 / PS 47).